A 419-amino-acid polypeptide reads, in one-letter code: Adenylosuccinate synthetase (419 aa).

GTP-binding positions include 11–17 (GDEGKGK) and 39–41 (GHT). The active-site Proton acceptor is Asp-12. Mg(2+) contacts are provided by Asp-12 and Gly-39. Residues 12-15 (DEGK), 37-40 (NAGH), Thr-129, Arg-143, Asn-218, Thr-233, and Arg-297 contribute to the IMP site. His-40 (proton donor) is an active-site residue. Position 293–299 (293–299 (VTTGRKR)) interacts with substrate. GTP contacts are provided by residues Arg-299, 325 to 327 (KLD), and 407 to 409 (GTG).

Belongs to the adenylosuccinate synthetase family. As to quaternary structure, homodimer. Mg(2+) serves as cofactor.

Its subcellular location is the cytoplasm. The enzyme catalyses IMP + L-aspartate + GTP = N(6)-(1,2-dicarboxyethyl)-AMP + GDP + phosphate + 2 H(+). Its pathway is purine metabolism; AMP biosynthesis via de novo pathway; AMP from IMP: step 1/2. In terms of biological role, plays an important role in the de novo pathway and in the salvage pathway of purine nucleotide biosynthesis. Catalyzes the first committed step in the biosynthesis of AMP from IMP. This is Adenylosuccinate synthetase from Coccidioides posadasii (strain C735) (Valley fever fungus).